The sequence spans 334 residues: 4-hydroxyproline 2-epimerase (334 aa).

Residue Cys91 is the Proton acceptor of the active site. Substrate is bound by residues Gly92 to His93, His224, and Asp250. The active-site Proton donor is Cys254. Gly255 to Thr256 provides a ligand contact to substrate.

This sequence belongs to the proline racemase family.

The catalysed reaction is trans-4-hydroxy-L-proline = cis-4-hydroxy-D-proline. In terms of biological role, catalyzes the epimerization of trans-4-hydroxy-L-proline (t4LHyp) to cis-4-hydroxy-D-proline (c4DHyp). Is likely involved in a degradation pathway that converts t4LHyp to alpha-ketoglutarate. Displays no proline racemase activity. This is 4-hydroxyproline 2-epimerase from Spirosoma linguale (strain ATCC 33905 / DSM 74 / LMG 10896 / Claus 1).